The chain runs to 217 residues: Ras-related protein RABA2a (217 aa).

19–26 serves as a coordination point for GTP; sequence GDSGVGKS. An Effector region motif is present at residues 41–49; the sequence is SKSTIGVEF. Residues 67–71, 125–128, and 155–156 contribute to the GTP site; these read DTAGQ, NKTD, and SA. Residue C213 is the site of S-palmitoyl cysteine attachment. Residue C214 is modified to Cysteine methyl ester. C214 carries S-geranylgeranyl cysteine lipidation. A propeptide spans 215–217 (removed in mature form); it reads SSS.

Belongs to the small GTPase superfamily. Rab family. In terms of tissue distribution, expressed in root tips.

The protein resides in the endosome membrane. Its subcellular location is the golgi apparatus. It localises to the trans-Golgi network membrane. In terms of biological role, intracellular vesicle trafficking and protein transport. The polypeptide is Ras-related protein RABA2a (RABA2A) (Arabidopsis thaliana (Mouse-ear cress)).